A 505-amino-acid chain; its full sequence is Deoxyguanosinetriphosphate triphosphohydrolase (505 aa).

Positions R66 to C273 constitute an HD domain.

This sequence belongs to the dGTPase family. Type 1 subfamily. Homotetramer. Mg(2+) serves as cofactor.

It catalyses the reaction dGTP + H2O = 2'-deoxyguanosine + triphosphate + H(+). DGTPase preferentially hydrolyzes dGTP over the other canonical NTPs. The polypeptide is Deoxyguanosinetriphosphate triphosphohydrolase (Salmonella choleraesuis (strain SC-B67)).